The following is an 868-amino-acid chain: Rifampicin phosphotransferase (868 aa).

The interval 1-313 (MSSFVLDFQE…IYIVQSRPIT (313 aa)) is ATP-binding. The ATP site is built by K22, R116, G131, T135, Q182, E296, Q308, and R310. The segment at 326–756 (NHVYISVGHQ…TSDGEIITGK (431 aa)) is rifampicin-binding. The interval 769-867 (GLPVSSGVVE…VHGTEGYIEV (99 aa)) is swivel phosphohistidine. The active-site Tele-phosphohistidine intermediate is the H827.

This sequence belongs to the rifampicin phosphotransferase family.

It catalyses the reaction rifampicin + ATP + H2O = 21-phosphorifampicin + AMP + phosphate + 2 H(+). Functionally, catalyzes the phosphorylation of rifampicin, also known as rifampin (RIF), leading to its inactivation. Confers high level resistance to a variety of clinically used rifamycin antibiotics. Does not show phosphoenolpyruvate (PEP) synthase activity. The chain is Rifampicin phosphotransferase from Bacillus cereus (strain ATCC 14579 / DSM 31 / CCUG 7414 / JCM 2152 / NBRC 15305 / NCIMB 9373 / NCTC 2599 / NRRL B-3711).